Reading from the N-terminus, the 497-residue chain is Tyrosine-protein kinase SPK-1 (497 aa).

The disordered stretch occupies residues 1-25 (MGQKFSIKCKKQSKNKNTSKCQKIP). In terms of domain architecture, SH3 spans 33–94 (PGSYMVKAKY…PSNYVSKQDG (62 aa)). The SH2 domain maps to 100–200 (EAWREIQRWE…NTHIPLTDPM (101 aa)). Positions 220–482 (IEILNEIGRG…LVLQEKMDLL (263 aa)) constitute a Protein kinase domain. ATP contacts are provided by residues 226 to 234 (IGRGFFGSV) and Lys248. Residue Asp342 is the Proton acceptor of the active site.

It belongs to the protein kinase superfamily. Tyr protein kinase family.

It carries out the reaction L-tyrosyl-[protein] + ATP = O-phospho-L-tyrosyl-[protein] + ADP + H(+). The protein is Tyrosine-protein kinase SPK-1 of Girardia tigrina (Planarian).